Here is a 275-residue protein sequence, read N- to C-terminus: Shikimate dehydrogenase (NADP(+)) (275 aa).

Shikimate is bound by residues 19–21 and T66; that span reads SKS. The Proton acceptor role is filled by K70. E82 contributes to the NADP(+) binding site. The shikimate site is built by N91 and D106. NADP(+) is bound by residues 130–134, 154–159, and M217; these read GAGGA and NRTASK. Position 219 (Y219) interacts with shikimate. G241 is a binding site for NADP(+).

The protein belongs to the shikimate dehydrogenase family. As to quaternary structure, homodimer.

It catalyses the reaction shikimate + NADP(+) = 3-dehydroshikimate + NADPH + H(+). The protein operates within metabolic intermediate biosynthesis; chorismate biosynthesis; chorismate from D-erythrose 4-phosphate and phosphoenolpyruvate: step 4/7. Involved in the biosynthesis of the chorismate, which leads to the biosynthesis of aromatic amino acids. Catalyzes the reversible NADPH linked reduction of 3-dehydroshikimate (DHSA) to yield shikimate (SA). This is Shikimate dehydrogenase (NADP(+)) from Colwellia psychrerythraea (strain 34H / ATCC BAA-681) (Vibrio psychroerythus).